We begin with the raw amino-acid sequence, 369 residues long: GTPase Obg (369 aa).

Residues 1–159 (MKFIDEAKIE…RELRLELKVL (159 aa)) enclose the Obg domain. The disordered stretch occupies residues 128-148 (IHFKSSTNRAPRQKSEGKEGE). One can recognise an OBG-type G domain in the interval 160 to 333 (ADIGLLGMPN…LVTEIYEYIA (174 aa)). Residues 166–173 (GMPNAGKS), 191–195 (FTTLH), 213–216 (DIPG), 283–286 (NKLD), and 314–316 (SAL) contribute to the GTP site. The Mg(2+) site is built by serine 173 and threonine 193.

The protein belongs to the TRAFAC class OBG-HflX-like GTPase superfamily. OBG GTPase family. As to quaternary structure, monomer. Requires Mg(2+) as cofactor.

Its subcellular location is the cytoplasm. In terms of biological role, an essential GTPase which binds GTP, GDP and possibly (p)ppGpp with moderate affinity, with high nucleotide exchange rates and a fairly low GTP hydrolysis rate. Plays a role in control of the cell cycle, stress response, ribosome biogenesis and in those bacteria that undergo differentiation, in morphogenesis control. This Janthinobacterium sp. (strain Marseille) (Minibacterium massiliensis) protein is GTPase Obg.